Reading from the N-terminus, the 453-residue chain is O-glucose prenyltransferase PaPT (453 aa).

95 to 96 (AP) provides a ligand contact to L-tryptophan. Positions 210, 212, 279, 281, 283, 368, and 435 each coordinate substrate.

This sequence belongs to the tryptophan dimethylallyltransferase family.

It participates in mycotoxin biosynthesis. In terms of biological role, O-glucose prenyltransferase; part of the 2 gene clusters that mediate the biosynthesis of fusicoccins, diterpene glucosides that display phytohormone-like activity and function as potent activators of plasma membrane H(+)-ATPases in plants by modifying 14-3-3 proteins and cause the plant disease constriction canker. The first step in the pathway is performed by the fusicoccadiene synthase PaFS that possesses both prenyl transferase and terpene cyclase activity, converting isopentenyl diphosphate and dimethylallyl diphosphate into geranylgeranyl diphosphate (GGDP) and successively converting GGDP into fusicocca-2,10(14)-diene, a precursor for fusicoccin H. The second step is the oxidation at the C-8 position by the cytochrome P450 monooxygenase PaP450-2 to yield fusicocca-2,10(14)-diene-8-beta-ol. The cytochrome P450 monooxygenase PaP450-1 then catalyzes the hydroxylation at the C-16 position to produce fusicocca-2,10(14)-diene-8-beta,16-diol. The dioxygenase fc-dox then catalyzes the 16-oxydation of fusicocca-2,10(14)-diene-8-beta,16-diol to yield an aldehyde (8-beta-hydroxyfusicocca-1,10(14)-dien-16-al). The short-chain dehydrogenase/reductase fc-sdr catalyzes the reduction of the aldehyde to yield fusicocca-1,10(14)-diene-8-beta,16-diol. The next step is the hydroxylation at C-9 performed by the cytochrome P450 monooxygenase PaP450-3 that leads to fusicoccin H aglycon which is glycosylated to fusicoccin H by the O-glycosyltransferase PaGT. Hydroxylation at C-12 by the cytochrome P450 monooxygenase PaP450-4 leads then to the production of fusicoccin Q and is followed by methylation by the O-methyltransferase PaMT to yield fusicoccin P. Fusicoccin P is further converted to fusicoccin J via prenylation by the O-glucose prenyltransferase PaPT. Cytochrome P450 monooxygenase PaP450-5 then performs hydroxylation at C-19 to yield dideacetyl-fusicoccin A which is acetylated to 3'-O-deacetyl-fusicoccin A by the O-acetyltransferase PaAT-2. Finally, a another acetylation by the O-acetyltransferase PaAT-1 yields fusicoccin A. The protein is O-glucose prenyltransferase PaPT of Phomopsis amygdali (Fusicoccum amygdali).